The following is a 466-amino-acid chain: Putative proline/betaine transporter (466 aa).

12 consecutive transmembrane segments (helical) span residues 20 to 42 (VVATGIGNAMEWFDFGVYAYTTA), 63 to 83 (FAALAIAFLLRPIGGVVFGII), 91 to 111 (VVLTSTIILMAFSTLTIGLLP), 116 to 136 (IGLWAPILLLLARVLQGFSTG), 164 to 184 (IGTLSGYIAASIMIAVLTFFL), 191 to 211 (SFGWRIPFLLGLFLGLFGLYL), 239 to 259 (IIRFYYIDIFVCFVAVVFFNV), 285 to 305 (VLITCVMAIMIPLALMFGKLA), 313 to 332 (VFLIGTGGLTLFSIIAFMLL), 337 to 354 (FVVIVIGIFILGFFLSTY), 377 to 397 (VTFNISVSIFGGTTPLVATWL), and 405 to 425 (LAPAYYLTAISVIGFLVITFL).

Belongs to the major facilitator superfamily. Metabolite:H+ Symporter (MHS) family (TC 2.A.1.6) family.

It localises to the cell membrane. Functionally, may be a proton symporter involved in the uptake of osmolytes such as proline and glycine betaine. In Staphylococcus aureus (strain MSSA476), this protein is Putative proline/betaine transporter (proP).